We begin with the raw amino-acid sequence, 87 residues long: Phosphoribosyl-ATP pyrophosphatase (87 aa).

The protein belongs to the PRA-PH family.

It is found in the cytoplasm. It carries out the reaction 1-(5-phospho-beta-D-ribosyl)-ATP + H2O = 1-(5-phospho-beta-D-ribosyl)-5'-AMP + diphosphate + H(+). Its pathway is amino-acid biosynthesis; L-histidine biosynthesis; L-histidine from 5-phospho-alpha-D-ribose 1-diphosphate: step 2/9. The polypeptide is Phosphoribosyl-ATP pyrophosphatase (Bifidobacterium longum (strain DJO10A)).